The chain runs to 331 residues: MLSPERLALPDYEYLAQRHVLTYMEDAVCQLLENREDISQYGIARFFTEYFNSVCQGTHILFREFSFVQATPHNRVSFLRAFWRCFRTVGKNGDLLTMKEYHCLLQLLCPDFPLELTQKAARIVLMDDAMDCLMSFSDFLFAFQIQFYYSEFLDSVAAIYEDLLSGKNPNTVIVPTSSSGQHRQRPALGEAGMLEGVEASLFYQCLENLCDRHKYSCPPPALVKEALSNVQRLTFYGFLMALSKHHGINQALGALPDKGDLMHDPAMDEELERLLAQVPGLVNSITASPEASCLPSRTPPRVGSPWRPLHHSRKVDGESDGSTEETDESET.

The segment at 1–111 (MLSPERLALP…HCLLQLLCPD (111 aa)) is required for interaction with PCM1. Residues 1–225 (MLSPERLALP…SCPPPALVKE (225 aa)) form a required for interaction with TPGS1, LRRC49, and TTLL1 region. The required for interaction with TPGS2 stretch occupies residues 112–331 (FPLELTQKAA…STEETDESET (220 aa)). The tract at residues 289–331 (PEASCLPSRTPPRVGSPWRPLHHSRKVDGESDGSTEETDESET) is disordered. Residues 318–331 (ESDGSTEETDESET) show a composition bias toward acidic residues. The residue at position 319 (Ser-319) is a Phosphoserine.

It belongs to the CSTPP1 family. Interacts with PCM1. Interacts with TTLL1, TPGS1, TPGS2 and LRRC49; the interactions link CSTPP1 to the complex TPGC. Binds to alpha-tubulin.

The protein localises to the cytoplasm. The protein resides in the cytoskeleton. It localises to the microtubule organizing center. It is found in the centrosome. Its subcellular location is the centriolar satellite. Regulator of the tubulin polyglutamylase complex (TPGC) that controls cytoskeletal organization, nuclear shape, and cilium disassembly by balancing microtubule and actin assembly. Regulates the assembly and stability of the TPGC and thereby modulates polyglutamylation of the microtubule, which antagonizes MAP4 binding. The sequence is that of Centriolar satellite-associated tubulin polyglutamylase complex regulator 1 (CSTPP1) from Macaca fascicularis (Crab-eating macaque).